Here is a 125-residue protein sequence, read N- to C-terminus: UPF0538 protein C2C4.04c (125 aa).

This sequence belongs to the UPF0538 family.

The protein is UPF0538 protein C2C4.04c of Schizosaccharomyces pombe (strain 972 / ATCC 24843) (Fission yeast).